Consider the following 294-residue polypeptide: tRNA dimethylallyltransferase (294 aa).

10-17 is a binding site for ATP; it reads GPTAVGKT. Position 12–17 (12–17) interacts with substrate; it reads TAVGKT. The segment at 35–38 is interaction with substrate tRNA; that stretch reads DSQQ.

The protein belongs to the IPP transferase family. In terms of assembly, monomer. Requires Mg(2+) as cofactor.

It carries out the reaction adenosine(37) in tRNA + dimethylallyl diphosphate = N(6)-dimethylallyladenosine(37) in tRNA + diphosphate. Its function is as follows. Catalyzes the transfer of a dimethylallyl group onto the adenine at position 37 in tRNAs that read codons beginning with uridine, leading to the formation of N6-(dimethylallyl)adenosine (i(6)A). The chain is tRNA dimethylallyltransferase from Streptococcus pneumoniae (strain P1031).